The sequence spans 1064 residues: MPKRRDIETILVIGSGPIVIGQAAEFDYAGTQACLALKEEGYKVILVNSNPATIMTDTEIADKVYMEPLTLDFVARIIRKERPDAILPTLGGQTGLNLAVELAKAGVLEECGVEILGTKLEAIEKAEDREQFRALMNELGEPVPESAIIHSLEEAYAFVEQIGYPVIVRPAFTLGGTGGGICTNEEELVEIVSTGLKLSPVHQCLLERSIAGYNQIEYEVMRDANDNAIVVCNMENIDPVGIHTGDSIVVAPSQTLSDREYQLLRNASLKIIRALGIEGGCNVQLALDPDSFRYYVIEVNPRVSRSSALASKATGYPIAKLAAKIAVGLTLDEMINPVTGKTYACFEPALDYVVTKIPRFPFDKFESANRRLGTQMKATGEVMSIGRTFEESLLKAVRSLEIGVHHLELNEAKTAADDVMEKRIRKAGDERLFYIAEALRRGVTVETLHEWSQIDRFFLHKIQNIIEMETVLKNHPGDLDVLKKAKGLGFSDAAIAALWNKTERDVYALRRQEGIVPVYKMVDTCAAEFTSETPYYYSTYEEENESIVTEKPSVIVLGSGPIRIGQGIEFDYATVHCVLAIKQAGYEAIIINNNPETVSTDFSTSDKLYFEPLTAEDVMHVIDLEQPVGVIVQFGGQTAINLAAELEARGVRLLGTTLEDLDRAEDRDKFEQALSELGIPKPAGKTAVSVEEAVAIAEEIGYPVLVRPSYVLGGRAMEIVYNREELLHYMEHAVRVNPQHPVLVDRYITGKEVEVDAIADGETVVIPGIMEHIERAGVHSGDSIAVYPPQTLSDDVIAKITDYTVKLARGLHIVGLLNIQFVVAGSDVYVLEVNPRSSRTVPFLSKITGVPMANLATKAILGAKLADMGYETGVCPVRPGVYVKVPVFSFAKLRNVDISLGPEMKSTGEVIGKDVTFEKALYKGLVASGIQIQPHGAVLLTVADKDKEEAVELARRFADIGYQLLATNGTAETLKAAGIPVTVVNKIHSASPNILDVIRQGKAQVVINTLTKGKQPESDGFRIRREVENGIPCLTSLDTARAMLQVLESMTFSTTAMTEGLVRS.

Residues 1 to 401 (MPKRRDIETI…SLLKAVRSLE (401 aa)) are carboxyphosphate synthetic domain. The ATP site is built by R129, R169, G175, G176, R208, I210, G241, I242, H243, Q284, and E298. The ATP-grasp 1 domain maps to 133 to 327 (RALMNELGEP…IAKLAAKIAV (195 aa)). Residues Q284, E298, and N300 each contribute to the Mg(2+) site. Mn(2+) is bound by residues Q284, E298, and N300. An oligomerization domain region spans residues 402 to 546 (IGVHHLELNE…YSTYEEENES (145 aa)). A carbamoyl phosphate synthetic domain region spans residues 547–929 (IVTEKPSVIV…ALYKGLVASG (383 aa)). An ATP-grasp 2 domain is found at 671 to 861 (EQALSELGIP…MANLATKAIL (191 aa)). Positions 707, 746, 748, 752, 777, 778, 779, 780, 820, and 832 each coordinate ATP. 3 residues coordinate Mg(2+): Q820, E832, and N834. Residues Q820, E832, and N834 each coordinate Mn(2+). An MGS-like domain is found at 930-1064 (IQIQPHGAVL…TAMTEGLVRS (135 aa)). The allosteric domain stretch occupies residues 930–1064 (IQIQPHGAVL…TAMTEGLVRS (135 aa)).

The protein belongs to the CarB family. As to quaternary structure, composed of two chains; the small (or glutamine) chain promotes the hydrolysis of glutamine to ammonia, which is used by the large (or ammonia) chain to synthesize carbamoyl phosphate. Tetramer of heterodimers (alpha,beta)4. The cofactor is Mg(2+). Requires Mn(2+) as cofactor.

It catalyses the reaction hydrogencarbonate + L-glutamine + 2 ATP + H2O = carbamoyl phosphate + L-glutamate + 2 ADP + phosphate + 2 H(+). It carries out the reaction hydrogencarbonate + NH4(+) + 2 ATP = carbamoyl phosphate + 2 ADP + phosphate + 2 H(+). It participates in amino-acid biosynthesis; L-arginine biosynthesis; carbamoyl phosphate from bicarbonate: step 1/1. The protein operates within pyrimidine metabolism; UMP biosynthesis via de novo pathway; (S)-dihydroorotate from bicarbonate: step 1/3. Its function is as follows. Small subunit of the glutamine-dependent carbamoyl phosphate synthetase (CPSase). CPSase catalyzes the formation of carbamoyl phosphate from the ammonia moiety of glutamine, carbonate, and phosphate donated by ATP, constituting the first step of the biosynthetic pathway leading to pyrimidine nucleotides. The large subunit (synthetase) binds the substrates ammonia (free or transferred from glutamine from the small subunit), hydrogencarbonate and ATP and carries out an ATP-coupled ligase reaction, activating hydrogencarbonate by forming carboxy phosphate which reacts with ammonia to form carbamoyl phosphate. The polypeptide is Carbamoyl phosphate synthase pyrimidine-specific large chain (pyrAB) (Geobacillus stearothermophilus (Bacillus stearothermophilus)).